The following is a 513-amino-acid chain: Histidine ammonia-lyase (513 aa).

The 5-imidazolinone (Ala-Gly) cross-link spans 145-147; sequence ASG. S146 bears the 2,3-didehydroalanine (Ser) mark.

This sequence belongs to the PAL/histidase family. Post-translationally, contains an active site 4-methylidene-imidazol-5-one (MIO), which is formed autocatalytically by cyclization and dehydration of residues Ala-Ser-Gly.

Its subcellular location is the cytoplasm. It catalyses the reaction L-histidine = trans-urocanate + NH4(+). The protein operates within amino-acid degradation; L-histidine degradation into L-glutamate; N-formimidoyl-L-glutamate from L-histidine: step 1/3. This Vibrio vulnificus (strain CMCP6) protein is Histidine ammonia-lyase.